Reading from the N-terminus, the 620-residue chain is EF-hand calcium-binding domain-containing protein 7 (620 aa).

Residues 1–24 (MANHSSLPSQKYAASERQEYQKPQ) form a disordered region. EF-hand domains follow at residues 98-133 (ATKN…KGEK) and 134-169 (MSQE…TCEQ). Residues 176 to 234 (ERMDSNSKAKRQQFGSYIEKSPERSSSPKSSHGNLKLFDSETSTRKENKSSRPSSARSY) are disordered. Residues 213–225 (FDSETSTRKENKS) are compositionally biased toward basic and acidic residues. Residues 394 to 429 (EFKSALSDMFDIIDLDGNGLLSLAEYNFFEMRTSGE) form the EF-hand 3 domain. Ca(2+) contacts are provided by D407, D409, N411, and E418.

The protein resides in the cell projection. It localises to the cilium membrane. Plays a role in the ciliary Hedgehog (Hh) signaling. The protein is EF-hand calcium-binding domain-containing protein 7 (efcab7) of Xenopus laevis (African clawed frog).